We begin with the raw amino-acid sequence, 587 residues long: MFTGQEYHSVDSNSNKQKDNNKRGIDDTSKILNNKIPHSVSDTSAAATTTSTMNNSALSRSLDPTDINYSTNMAGVVDQIHDYTTSNRNSLTPQYSIAAGNVNSHDRVVKPSANSNYQQAAYLRQQQQQDQRQQSPSMKTEEESQLYGDILMNSGVVQDMHQNLATHTNLSQLSSTRKSAPNDSTTAPTNASNIANTASVNKQMYFMNMNMNNNPHALNDPSILETLSPFFQPFGVDVAHLPMTNPPIFQSSLPGCDEPIRRRRISISNGQISQLGEDIETLENLHNTQPPPMPNFHNYNGLSQTRNVSNKPVFNQAVPVSSIPQYNAKKVINPTKDSALGDQSVIYSKSQQRNFVNAPSKNTPAESISDLEGMTTFAPTTGGENRGKSALRESHSNPSFTPKSQGSHLNLAANTQGNPIPGTTAWKRARLLERNRIAASKCRQRKKVAQLQLQKEFNEIKDENRILLKKLNYYEKLISKFKKFSKIHLREHEKLNKDSDNNVNGTNSSNKNESMTVDSLKIIEELLMIDSDVTEVDKDTGKIIAIKHEPYSQRFGSDTDDDDIDLKPVEGGKDPDNQSLPNSEKIK.

Disordered regions lie at residues 1–62 (MFTG…SRSL), 123–144 (LRQQ…EEES), 169–195 (NLSQ…SNIA), and 381–423 (TGGE…IPGT). Residues 16-29 (KQKDNNKRGIDDTS) are compositionally biased toward basic and acidic residues. Low complexity-rich tracts occupy residues 39 to 57 (SVSD…NNSA) and 123 to 134 (LRQQQQQDQRQQ). A phosphoserine mark is found at Ser-171 and Ser-179. Over residues 385–395 (NRGKSALRESH) the composition is skewed to basic and acidic residues. A compositionally biased stretch (polar residues) spans 396 to 418 (SNPSFTPKSQGSHLNLAANTQGN). Residue Ser-399 is modified to Phosphoserine. A bZIP domain is found at 425-488 (AWKRARLLER…SKFKKFSKIH (64 aa)). Residues 427-447 (KRARLLERNRIAASKCRQRKK) form a basic motif region. The segment at 453–467 (LQKEFNEIKDENRIL) is leucine-zipper. A disordered region spans residues 552-587 (SQRFGSDTDDDDIDLKPVEGGKDPDNQSLPNSEKIK). Ser-557 carries the post-translational modification Phosphoserine. Thr-559 carries the post-translational modification Phosphothreonine. The span at 565-576 (DLKPVEGGKDPD) shows a compositional bias: basic and acidic residues. A compositionally biased stretch (polar residues) spans 577–587 (NQSLPNSEKIK).

This sequence belongs to the bZIP family.

Its subcellular location is the nucleus. Transcriptional activator of promoters containing ATF/CREB sites. Can independently stimulate transcription through ATF/CREB sites. Important for a variety of biological functions including growth on non-optimal carbon sources. In Saccharomyces cerevisiae (strain ATCC 204508 / S288c) (Baker's yeast), this protein is ATF/CREB activator 2 (CST6).